Consider the following 457-residue polypeptide: Bifunctional protein GlmU (457 aa).

The tract at residues 1 to 230 (MLNVVILAAG…SWETLGVNSR (230 aa)) is pyrophosphorylase. UDP-N-acetyl-alpha-D-glucosamine is bound by residues 7-10 (LAAG), lysine 21, glutamine 73, 78-79 (GT), 104-106 (YGD), glycine 140, glutamate 155, asparagine 170, and asparagine 228. Aspartate 106 contacts Mg(2+). Asparagine 228 contacts Mg(2+). The interval 231–251 (VQQAQLERAWQSELARRQLEA) is linker. Positions 252–457 (GVTLADPARF…EGWKRPVKKS (206 aa)) are N-acetyltransferase. Arginine 334 and lysine 352 together coordinate UDP-N-acetyl-alpha-D-glucosamine. Residue histidine 364 is the Proton acceptor of the active site. Residues tyrosine 367 and asparagine 378 each contribute to the UDP-N-acetyl-alpha-D-glucosamine site. Acetyl-CoA contacts are provided by residues alanine 381, 387–388 (NY), serine 406, alanine 424, and arginine 441.

In the N-terminal section; belongs to the N-acetylglucosamine-1-phosphate uridyltransferase family. It in the C-terminal section; belongs to the transferase hexapeptide repeat family. Homotrimer. Mg(2+) is required as a cofactor.

Its subcellular location is the cytoplasm. It catalyses the reaction alpha-D-glucosamine 1-phosphate + acetyl-CoA = N-acetyl-alpha-D-glucosamine 1-phosphate + CoA + H(+). The catalysed reaction is N-acetyl-alpha-D-glucosamine 1-phosphate + UTP + H(+) = UDP-N-acetyl-alpha-D-glucosamine + diphosphate. Its pathway is nucleotide-sugar biosynthesis; UDP-N-acetyl-alpha-D-glucosamine biosynthesis; N-acetyl-alpha-D-glucosamine 1-phosphate from alpha-D-glucosamine 6-phosphate (route II): step 2/2. It functions in the pathway nucleotide-sugar biosynthesis; UDP-N-acetyl-alpha-D-glucosamine biosynthesis; UDP-N-acetyl-alpha-D-glucosamine from N-acetyl-alpha-D-glucosamine 1-phosphate: step 1/1. It participates in bacterial outer membrane biogenesis; LPS lipid A biosynthesis. In terms of biological role, catalyzes the last two sequential reactions in the de novo biosynthetic pathway for UDP-N-acetylglucosamine (UDP-GlcNAc). The C-terminal domain catalyzes the transfer of acetyl group from acetyl coenzyme A to glucosamine-1-phosphate (GlcN-1-P) to produce N-acetylglucosamine-1-phosphate (GlcNAc-1-P), which is converted into UDP-GlcNAc by the transfer of uridine 5-monophosphate (from uridine 5-triphosphate), a reaction catalyzed by the N-terminal domain. This chain is Bifunctional protein GlmU, found in Bordetella bronchiseptica (strain ATCC BAA-588 / NCTC 13252 / RB50) (Alcaligenes bronchisepticus).